We begin with the raw amino-acid sequence, 327 residues long: Polyprenyl transferase esdpC (327 aa).

8 consecutive transmembrane segments (helical) span residues 35-54 (YNPL…AGAS), 73-93 (LLVF…NDWI), 118-138 (EALI…AYTL), 140-160 (GHNV…YPFG), 171-191 (YPQY…WLAI), 202-222 (IMES…LNTA), 239-259 (VYFL…ALVL), and 307-327 (ENFA…LLKS).

The protein belongs to the UbiA prenyltransferase family. Requires Mg(2+) as cofactor.

The protein localises to the membrane. It participates in secondary metabolite biosynthesis; terpenoid biosynthesis. In terms of biological role, olyprenyl transferase; part of the cluster that mediates the biosynthesis of shearones, diterpenoid pyrones (DPs) which are structurally diverse meroterpenoids consisting of a diterpene linked by a pyrone, and which may exhibit a range of bioactivities. Within the pathway, esdpC takes part to the biosynthesis of the molecular scaffold by catalyzing the C-3 geranylgeranylation reaction of the alpha-pyrone produced by esdpA. The molecular scaffold is commonly biosynthesized by a series of enzymes including the non-reducing polyketide synthase (NR-PKS) esdpA that generates an alpha-pyrone; the prenyltransferase esdpC that attaches a geranylgeranyl pyrophosphate (GGPP) produced by the GGPP synthase (GGPPS) esdpD onto the pyrone unit; the FAD-dependent monooxygenase esdpE that converts an olefin on the diterpene unit into an epoxide; and the terpene cyclase esdpB that catalyzes the cyclization reactions to give the molecular backbone shearone A. In the modification steps, esdpF oxidizes the hydroxy group to a ketone at C-3 and esdpG then attaches hydroxy groups at both C-11 and C-12. After that, esdpI hydroxylates at C-20 and esdpH hydroxylates at C-6'. The ether bridge is generated by nucleophilic attack of the hydroxy group at C-20 to the carbonyl carbon at C-3. EsdpH can also functions prior to esdpI. The different combinations of these modification enzymes lead to the production of diverse shearone derivatives, shearone I being the end product of the pathway. The alpha-ketoglutarate-dependent dioxygenase esdpJ seems not to be involved in this pathway. This chain is Polyprenyl transferase esdpC, found in Penicillium shearii (Eupenicillium shearii).